A 363-amino-acid polypeptide reads, in one-letter code: MAKVAKDLNPGVQKMSLGQQQSARGVPCLRCKGTCSGFEPHSWRKICKSCKCSQEDHFLSSDLEDDRKIGRLLMDSKYSTLTARVKGGDGIRIYKRNRMIMTNPIATGKDPTFDTITYEWAPPGVTQKLGLQYMELIPKEKQPVTGTEGAYYRRRQLMHQLPIYDQDPSRCRGLLESELKVMEEFVKQYKSEALGVGEVALPGQGGLPKEEGKQQEKPEGAETAAPTANGSLGDPSKEYVCELCKGVAPADSPVVYSDRAGYSKQWHPACFVCAKCSEPLVDLIYFWKDGAPWCGRHYCESLRPRCSGCDEIIFSEDYQRVEDLAWHRKHFVCEGCEQQLGGRAYIITKGQLLCPTCSKSKRT.

Serine 16 is subject to Phosphoserine. The 108-residue stretch at 99-206 (MIMTNPIATG…GEVALPGQGG (108 aa)) folds into the PET domain. Residues 200-233 (ALPGQGGLPKEEGKQQEKPEGAETAAPTANGSLG) are disordered. Residues 208–220 (PKEEGKQQEKPEG) show a composition bias toward basic and acidic residues. LIM zinc-binding domains follow at residues 239–304 (YVCE…SLRP) and 305–363 (RCSG…SKRT).

Interacts with beta-dystroglycan. Interacts with GATA1, GATA4 and GATA6. In terms of tissue distribution, highly expressed in both skeletal muscle and cardiac muscle.

The protein resides in the cytoplasm. The protein localises to the nucleus. Its function is as follows. Transcriptional cofactor that restricts GATA6 function by inhibiting DNA-binding, resulting in repression of GATA6 transcriptional activation of downstream target genes. Represses GATA6-mediated trans activation of lung- and cardiac tissue-specific promoters. Inhibits DNA-binding by GATA4 and GATA1 to the cTNC promoter. Plays a critical role in the development of cardiac hypertrophy via activation of calcineurin/nuclear factor of activated T-cells signaling pathway. The chain is LIM and cysteine-rich domains protein 1 (LMCD1) from Sus scrofa (Pig).